The chain runs to 331 residues: Glyceraldehyde-3-phosphate dehydrogenase (331 aa).

NAD(+) contacts are provided by residues 12–13, Asp-34, Arg-78, and Thr-120; that span reads RI. 2 positions are modified to N6-acetyllysine: Lys-132 and Lys-138. D-glyceraldehyde 3-phosphate contacts are provided by residues 149–151 and Thr-180; that span reads SCT. Cys-150 acts as the Nucleophile in catalysis. At Lys-192 the chain carries N6-acetyllysine. D-glyceraldehyde 3-phosphate contacts are provided by residues 209-210 and Arg-232; that span reads TG. Lys-249 bears the N6-acetyllysine mark. Asn-314 provides a ligand contact to NAD(+).

It belongs to the glyceraldehyde-3-phosphate dehydrogenase family. As to quaternary structure, homotetramer.

The protein localises to the cytoplasm. The enzyme catalyses D-glyceraldehyde 3-phosphate + phosphate + NAD(+) = (2R)-3-phospho-glyceroyl phosphate + NADH + H(+). It participates in carbohydrate degradation; glycolysis; pyruvate from D-glyceraldehyde 3-phosphate: step 1/5. In terms of biological role, catalyzes the oxidative phosphorylation of glyceraldehyde 3-phosphate (G3P) to 1,3-bisphosphoglycerate (BPG) using the cofactor NAD. The first reaction step involves the formation of a hemiacetal intermediate between G3P and a cysteine residue, and this hemiacetal intermediate is then oxidized to a thioester, with concomitant reduction of NAD to NADH. The reduced NADH is then exchanged with the second NAD, and the thioester is attacked by a nucleophilic inorganic phosphate to produce BPG. In Escherichia coli O6:H1 (strain CFT073 / ATCC 700928 / UPEC), this protein is Glyceraldehyde-3-phosphate dehydrogenase (gapA).